We begin with the raw amino-acid sequence, 513 residues long: Cytochrome P450 monooxygenase asaD (513 aa).

The helical transmembrane segment at 14-34 (ILYPFLFGIFAVASLCIATLL) threads the bilayer. N-linked (GlcNAc...) asparagine glycosylation is found at asparagine 258, asparagine 370, asparagine 431, and asparagine 441. Cysteine 461 is a binding site for heme.

It belongs to the cytochrome P450 family. The cofactor is heme.

It localises to the membrane. It participates in secondary metabolite biosynthesis. In terms of biological role, cytochrome P450 monooxygenase; part of the gene cluster that mediates the biosynthesis of aspergillic acid, a hydroxamic acid-containing pyrazinone with aliphatic side chains that originates from leucine (Leu) and isoleucine (Ile). Aspergillic acid has antibiotic properties and was shown to be lethal to mice. The first step in the pathway is the production of deoxyaspergillic acid via a condensation between the Ile amine and the Leu carboxylic acid, followed by a reductive release from the protein forming the dipeptide aldehyde NH(2)-Leu-Ile-CHO, which could undergo an intermolecular cyclization resulting in a dihydropyrazinone. As the NRPS asaC lacks a condensation domain, it is improbable that it is responsible for condensation of Leu and Ile. One possibility is that asaC acts on a previously condensed dipeptide and functions as a Leu-Ile reductase to yield deoxyaspergillic acid. After asaC forms deoxyaspergillic acid, the cytochrome P450 asaD oxidizes the pyrazinone to the hydroxamic acid-containing bioactive metabolite aspergillic acid. The hydroxylase/desaturase asaB can then convert aspergillic acid to hydroxyaspergillic acid. Both aspergillic acid and hydroxyaspergillic acid can form complexes with iron producing ferriaspergillin analogs. The chain is Cytochrome P450 monooxygenase asaD from Aspergillus flavus (strain ATCC 200026 / FGSC A1120 / IAM 13836 / NRRL 3357 / JCM 12722 / SRRC 167).